Here is a 242-residue protein sequence, read N- to C-terminus: Probable transcriptional regulatory protein NGK_1508 (242 aa).

The protein belongs to the TACO1 family.

The protein localises to the cytoplasm. This Neisseria gonorrhoeae (strain NCCP11945) protein is Probable transcriptional regulatory protein NGK_1508.